The primary structure comprises 285 residues: Release factor glutamine methyltransferase (285 aa).

Residues 124 to 128, Asp147, and Asn190 each bind S-adenosyl-L-methionine; that span reads GTGSG. 190 to 193 is a substrate binding site; it reads NPPY.

The protein belongs to the protein N5-glutamine methyltransferase family. PrmC subfamily.

The catalysed reaction is L-glutaminyl-[peptide chain release factor] + S-adenosyl-L-methionine = N(5)-methyl-L-glutaminyl-[peptide chain release factor] + S-adenosyl-L-homocysteine + H(+). Methylates the class 1 translation termination release factors RF1/PrfA and RF2/PrfB on the glutamine residue of the universally conserved GGQ motif. The sequence is that of Release factor glutamine methyltransferase from Flavobacterium psychrophilum (strain ATCC 49511 / DSM 21280 / CIP 103535 / JIP02/86).